Reading from the N-terminus, the 1419-residue chain is Collagen alpha-1(II) chain (1419 aa).

The signal sequence occupies residues 1 to 25 (MIRLGAPQSLVLLTLLIATVLQCQG). The propeptide at 26 to 113 (QDARKLGPKG…PGLGGGNFAA (88 aa)) is N-terminal propeptide. The disordered stretch occupies residues 28 to 1168 (ARKLGPKGQK…GQREKGPDPL (1141 aa)). 2 stretches are compositionally biased toward basic and acidic residues: residues 36 to 47 (QKGEPGDIKDII) and 64 to 85 (PRGD…RDGE). Residues 89-104 (PGNPGPPGPPGPPGPP) are compositionally biased toward pro residues. At Lys-122 the chain carries 5-hydroxylysine. Residue Lys-122 is glycosylated (O-linked (Gal...) hydroxylysine). A compositionally biased stretch (low complexity) spans 124–135 (GGAQMGVMQGPM). The segment at 133–1146 (GPMGPMGPRG…PGPPGPPGPP (1014 aa)) is triple-helical region. Residues 140–149 (PRGPPGPAGA) are compositionally biased toward pro residues. Residues 150–171 (PGPQGFQGNPGEPGEPGVSGPI) show a composition bias toward low complexity. Residues 183-197 (PGDDGEAGKPGKAGE) show a composition bias toward basic and acidic residues. 5-hydroxylysine occurs at positions 219, 231, and 240. O-linked (Gal...) hydroxylysine glycosylation is found at Lys-219, Lys-231, and Lys-240. Composition is skewed to low complexity over residues 242–252 (ESGSPGENGSP) and 267–282 (TGPA…DGQP). Positions 292–301 (GPAGGPGFLG) are enriched in gly residues. Position 306 is a 5-hydroxylysine (Lys-306). Lys-306 carries O-linked (Gal...) hydroxylysine glycosylation. The segment covering 335-363 (PAGASGNPGTDGIPGAKGSAGAPGIAGAP) has biased composition (low complexity). Pro residues predominate over residues 365-374 (FPGPRGPPGP). Low complexity predominate over residues 404-417 (ETGPAGPQGAPGPA). A 5-hydroxylysine mark is found at Lys-540 and Lys-552. O-linked (Gal...) hydroxylysine glycans are attached at residues Lys-540 and Lys-552. The segment covering 554 to 563 (LAGAPGLRGL) has biased composition (low complexity). Residues Pro-591 and Pro-600 each carry the 4-hydroxyproline modification. Pro-602 is modified (3-hydroxyproline; partial). A 4-hydroxyproline mark is found at Pro-603 and Pro-606. Residues 638–668 (ERGSPGAQGLQGPRGLPGTPGTDGPKGAAGP) are compositionally biased toward low complexity. The segment covering 696–707 (KGDRGDVGEKGP) has biased composition (basic and acidic residues). Composition is skewed to low complexity over residues 765 to 780 (AGFA…PGAK) and 809 to 846 (PTGV…NGNP). Position 839 is a 3-hydroxyproline; partial (Pro-839). Pro-840, Pro-846, and Pro-852 each carry 4-hydroxyproline. The segment covering 1001-1011 (APGPPGSPGPA) has biased composition (pro residues). Residues 1047-1061 (RGDKGEAGEPGERGL) are compositionally biased toward basic and acidic residues. At Pro-1076 the chain carries 3-hydroxyproline; partial. Composition is skewed to low complexity over residues 1080–1089 (SGDQGTSGPA) and 1103–1113 (PSGKDGSNGIP). Pro-1113 carries the post-translational modification 4-hydroxyproline. Pro-1118 bears the 3-hydroxyproline mark. Pro-1119 is modified (4-hydroxyproline). Residues 1131-1148 (AGPPGNPGPPGPPGPPGP) show a composition bias toward pro residues. Pro-1133 is modified (3-hydroxyproline; partial). 4-hydroxyproline occurs at positions 1134 and 1137. At Pro-1139 the chain carries 3-hydroxyproline; partial. 4-hydroxyproline is present on residues Pro-1140 and Pro-1143. A 3-hydroxyproline; partial modification is found at Pro-1145. A 4-hydroxyproline modification is found at Pro-1146. The tract at residues 1147 to 1173 (GPGIDMSAFAGLGQREKGPDPLQYMRA) is nonhelical region (C-terminal). In terms of domain architecture, Fibrillar collagen NC1 spans 1185–1419 (VEVDATLKSL…GVDIGPVCFL (235 aa)). 3 disulfide bridges follow: Cys-1215-Cys-1247, Cys-1255-Cys-1417, and Cys-1325-Cys-1370. Ca(2+) contacts are provided by Asp-1233, Asn-1235, Gln-1236, Cys-1238, and Asp-1241. N-linked (GlcNAc...) asparagine glycosylation occurs at Asn-1320.

Belongs to the fibrillar collagen family. Homotrimers of alpha 1(II) chains. Contains mostly 4-hydroxyproline. Prolines at the third position of the tripeptide repeating unit (G-X-P) are 4-hydroxylated in some or all of the chains. In terms of processing, contains 3-hydroxyproline at a few sites. This modification occurs on the first proline residue in the sequence motif Gly-Pro-Hyp, where Hyp is 4-hydroxyproline. Post-translationally, lysine residues at the third position of the tripeptide repeating unit (G-X-Y) are 5-hydroxylated in some or all of the chains. O-glycosylated on hydroxylated lysine residues. The O-linked glycan consists of a Glc-Gal disaccharide. In terms of tissue distribution, expressed in chondrocytes.

The protein localises to the secreted. Its subcellular location is the extracellular space. It is found in the extracellular matrix. Functionally, type II collagen is specific for cartilaginous tissues. It is essential for the normal embryonic development of the skeleton, for linear growth and for the ability of cartilage to resist compressive forces. The protein is Collagen alpha-1(II) chain of Rattus norvegicus (Rat).